The following is a 415-amino-acid chain: Serine hydroxymethyltransferase (415 aa).

Residues Leu-121 and 125 to 127 (GHL) each bind (6S)-5,6,7,8-tetrahydrofolate. Lys-229 carries the N6-(pyridoxal phosphate)lysine modification.

This sequence belongs to the SHMT family. In terms of assembly, homodimer. Pyridoxal 5'-phosphate is required as a cofactor.

The protein localises to the cytoplasm. It catalyses the reaction (6R)-5,10-methylene-5,6,7,8-tetrahydrofolate + glycine + H2O = (6S)-5,6,7,8-tetrahydrofolate + L-serine. Its pathway is one-carbon metabolism; tetrahydrofolate interconversion. It participates in amino-acid biosynthesis; glycine biosynthesis; glycine from L-serine: step 1/1. In terms of biological role, catalyzes the reversible interconversion of serine and glycine with tetrahydrofolate (THF) serving as the one-carbon carrier. This reaction serves as the major source of one-carbon groups required for the biosynthesis of purines, thymidylate, methionine, and other important biomolecules. Also exhibits THF-independent aldolase activity toward beta-hydroxyamino acids, producing glycine and aldehydes, via a retro-aldol mechanism. In Bordetella petrii (strain ATCC BAA-461 / DSM 12804 / CCUG 43448), this protein is Serine hydroxymethyltransferase.